The sequence spans 314 residues: Type II methyltransferase M.HpaI (314 aa).

It belongs to the N(4)/N(6)-methyltransferase family.

It carries out the reaction a 2'-deoxyadenosine in DNA + S-adenosyl-L-methionine = an N(6)-methyl-2'-deoxyadenosine in DNA + S-adenosyl-L-homocysteine + H(+). In terms of biological role, a beta subtype methylase that recognizes the double-stranded sequence 5'-GTTAAC-3', methylates A-5 on both strands, and protects the DNA from cleavage by the HpaI endonuclease. This chain is Type II methyltransferase M.HpaI (hpaIM), found in Haemophilus parainfluenzae.